The following is a 439-amino-acid chain: UDP-N-acetylmuramoylalanine--D-glutamate ligase (439 aa).

116 to 122 contributes to the ATP binding site; that stretch reads GSNGKTT.

This sequence belongs to the MurCDEF family.

It is found in the cytoplasm. The enzyme catalyses UDP-N-acetyl-alpha-D-muramoyl-L-alanine + D-glutamate + ATP = UDP-N-acetyl-alpha-D-muramoyl-L-alanyl-D-glutamate + ADP + phosphate + H(+). Its pathway is cell wall biogenesis; peptidoglycan biosynthesis. Its function is as follows. Cell wall formation. Catalyzes the addition of glutamate to the nucleotide precursor UDP-N-acetylmuramoyl-L-alanine (UMA). The protein is UDP-N-acetylmuramoylalanine--D-glutamate ligase of Shewanella oneidensis (strain ATCC 700550 / JCM 31522 / CIP 106686 / LMG 19005 / NCIMB 14063 / MR-1).